The following is a 107-amino-acid chain: Nucleoid-associated protein BLi00029/BL02358 (107 aa).

The tract at residues 1 to 27 (MRGGMGNMQKMMKQMQKMQKDMQKAQE) is disordered. Low complexity predominate over residues 8-17 (MQKMMKQMQK). Over residues 18–27 (MQKDMQKAQE) the composition is skewed to basic and acidic residues.

Belongs to the YbaB/EbfC family. As to quaternary structure, homodimer.

Its subcellular location is the cytoplasm. The protein resides in the nucleoid. In terms of biological role, binds to DNA and alters its conformation. May be involved in regulation of gene expression, nucleoid organization and DNA protection. The polypeptide is Nucleoid-associated protein BLi00029/BL02358 (Bacillus licheniformis (strain ATCC 14580 / DSM 13 / JCM 2505 / CCUG 7422 / NBRC 12200 / NCIMB 9375 / NCTC 10341 / NRRL NRS-1264 / Gibson 46)).